The chain runs to 231 residues: Orotidine 5'-phosphate decarboxylase (231 aa).

Residues Asp-11, Lys-33, 60 to 69 (DLKFHDIPNT), Thr-117, Arg-178, Gln-187, Gly-207, and Arg-208 each bind substrate. The Proton donor role is filled by Lys-62.

The protein belongs to the OMP decarboxylase family. Type 1 subfamily. As to quaternary structure, homodimer.

It catalyses the reaction orotidine 5'-phosphate + H(+) = UMP + CO2. The protein operates within pyrimidine metabolism; UMP biosynthesis via de novo pathway; UMP from orotate: step 2/2. In terms of biological role, catalyzes the decarboxylation of orotidine 5'-monophosphate (OMP) to uridine 5'-monophosphate (UMP). This Nitrosomonas europaea (strain ATCC 19718 / CIP 103999 / KCTC 2705 / NBRC 14298) protein is Orotidine 5'-phosphate decarboxylase.